The primary structure comprises 162 residues: MELVQQLIADYGYLAIFLMLVLGIVGLPIPDEVMMTVVGYFTHTDVLNYELSILISFVGALLGMLISYMIGRKAGRPFIDKYGKWVGLKEKRMMKVEKWMKKYGPYSLILGYFIPGVRHVTCYFSGIGKMDLKTYVAFAAIGAFLWCFVFITIGRVIGIIHV.

A run of 3 helical transmembrane segments spans residues L7–L27, L51–G71, and T134–G154.

Belongs to the DedA family.

It localises to the cell membrane. This is an uncharacterized protein from Bacillus subtilis (strain 168).